The sequence spans 336 residues: Holliday junction branch migration complex subunit RuvB (336 aa).

The large ATPase domain (RuvB-L) stretch occupies residues 1 to 185 (MSIIVERLLS…FGVLSRVEYY (185 aa)). Residues Leu24, Arg25, Gly66, Lys69, Thr70, Thr71, 132-134 (EDF), Arg175, Tyr185, and Arg222 each bind ATP. A Mg(2+)-binding site is contributed by Thr70. Residues 186-256 (TVDQLSAIVE…ITQMALELLQ (71 aa)) form a small ATPAse domain (RuvB-S) region. The segment at 259 to 336 (KLGLDHIDHK…EHFGMEIPKV (78 aa)) is head domain (RuvB-H). The DNA site is built by Arg314 and Arg319.

This sequence belongs to the RuvB family. In terms of assembly, homohexamer. Forms an RuvA(8)-RuvB(12)-Holliday junction (HJ) complex. HJ DNA is sandwiched between 2 RuvA tetramers; dsDNA enters through RuvA and exits via RuvB. An RuvB hexamer assembles on each DNA strand where it exits the tetramer. Each RuvB hexamer is contacted by two RuvA subunits (via domain III) on 2 adjacent RuvB subunits; this complex drives branch migration. In the full resolvosome a probable DNA-RuvA(4)-RuvB(12)-RuvC(2) complex forms which resolves the HJ.

The protein resides in the cytoplasm. It carries out the reaction ATP + H2O = ADP + phosphate + H(+). The RuvA-RuvB-RuvC complex processes Holliday junction (HJ) DNA during genetic recombination and DNA repair, while the RuvA-RuvB complex plays an important role in the rescue of blocked DNA replication forks via replication fork reversal (RFR). RuvA specifically binds to HJ cruciform DNA, conferring on it an open structure. The RuvB hexamer acts as an ATP-dependent pump, pulling dsDNA into and through the RuvAB complex. RuvB forms 2 homohexamers on either side of HJ DNA bound by 1 or 2 RuvA tetramers; 4 subunits per hexamer contact DNA at a time. Coordinated motions by a converter formed by DNA-disengaged RuvB subunits stimulates ATP hydrolysis and nucleotide exchange. Immobilization of the converter enables RuvB to convert the ATP-contained energy into a lever motion, pulling 2 nucleotides of DNA out of the RuvA tetramer per ATP hydrolyzed, thus driving DNA branch migration. The RuvB motors rotate together with the DNA substrate, which together with the progressing nucleotide cycle form the mechanistic basis for DNA recombination by continuous HJ branch migration. Branch migration allows RuvC to scan DNA until it finds its consensus sequence, where it cleaves and resolves cruciform DNA. This chain is Holliday junction branch migration complex subunit RuvB, found in Bacillus cereus (strain ATCC 14579 / DSM 31 / CCUG 7414 / JCM 2152 / NBRC 15305 / NCIMB 9373 / NCTC 2599 / NRRL B-3711).